The following is a 407-amino-acid chain: Phosphopentomutase (407 aa).

Mn(2+) is bound by residues Asp-11, Asp-305, His-310, Asp-346, His-347, and His-358.

Belongs to the phosphopentomutase family. It depends on Mn(2+) as a cofactor.

The protein localises to the cytoplasm. It catalyses the reaction 2-deoxy-alpha-D-ribose 1-phosphate = 2-deoxy-D-ribose 5-phosphate. It carries out the reaction alpha-D-ribose 1-phosphate = D-ribose 5-phosphate. The protein operates within carbohydrate degradation; 2-deoxy-D-ribose 1-phosphate degradation; D-glyceraldehyde 3-phosphate and acetaldehyde from 2-deoxy-alpha-D-ribose 1-phosphate: step 1/2. In terms of biological role, isomerase that catalyzes the conversion of deoxy-ribose 1-phosphate (dRib-1-P) and ribose 1-phosphate (Rib-1-P) to deoxy-ribose 5-phosphate (dRib-5-P) and ribose 5-phosphate (Rib-5-P), respectively. This chain is Phosphopentomutase, found in Legionella pneumophila (strain Lens).